Reading from the N-terminus, the 225-residue chain is uncharacterized protein (225 aa).

This is an uncharacterized protein from Ureaplasma parvum serovar 3 (strain ATCC 700970).